Reading from the N-terminus, the 487-residue chain is GTPase Der (487 aa).

2 EngA-type G domains span residues 3–166 (PVIA…PRDA) and 193–366 (IKIA…QSAV). GTP contacts are provided by residues 9-16 (GRPNVGKS), 56-60 (DTGGI), 118-121 (NKID), 199-206 (GRPNVGKS), 246-250 (DTAGV), and 311-314 (NKWD). The 85-residue stretch at 367-451 (TRWPTSRLTQ…PIRIEYKGGE (85 aa)) folds into the KH-like domain. A compositionally biased stretch (basic and acidic residues) spans 448-461 (KGGENPYEGKKNTL). The disordered stretch occupies residues 448 to 487 (KGGENPYEGKKNTLTDRQVNKKRRLMSHHKKAEKKRRDKR). Residues 467–487 (NKKRRLMSHHKKAEKKRRDKR) show a composition bias toward basic residues.

Belongs to the TRAFAC class TrmE-Era-EngA-EngB-Septin-like GTPase superfamily. EngA (Der) GTPase family. Associates with the 50S ribosomal subunit.

In terms of biological role, GTPase that plays an essential role in the late steps of ribosome biogenesis. The protein is GTPase Der of Pseudomonas putida (strain ATCC 47054 / DSM 6125 / CFBP 8728 / NCIMB 11950 / KT2440).